The primary structure comprises 1516 residues: EF-hand calcium-binding domain-containing protein 6 (1516 aa).

Positions 1 to 23 (MKRNGTRLNFAKANSTKSGSTRA) are disordered. Residues 12 to 21 (KANSTKSGST) are compositionally biased toward polar residues. EF-hand domains follow at residues 96–131 (SRRDDIKKVFQILDRNHNQMVTKGDLKRVITAFLIP), 197–232 (RNMRSIRKVFQVMDVNNTGLVQPQELRRVLETFCLR), 321–356 (KSYEKIEKALSAGDPSKGGYISLNYLKVVLDTFIYR), 444–462 (SGHITWEELRHILNCMVAK), and 528–563 (RNLQAFYSMLQSYDLRDTGTIGKNNFRKVMRVFCPY). Positions 109, 111, 113, 115, 120, 210, 212, 214, and 221 each coordinate Ca(2+). Residues 618–638 (EEPGQQDERTQPSGEKTSEIN) form a disordered region. Over residues 628 to 638 (QPSGEKTSEIN) the composition is skewed to polar residues. EF-hand domains are found at residues 674–690 (KINQEEFRKVLERSGMP), 763–798 (ESFRDVYSAFFRIDLDRDGIISMHDFHRLLQYLQLN), 905–940 (LTPREFEKLWQNYDTEGRGYITYQEFLHRLGIRYSP), 1086–1121 (SSQPALVEAFSALDKEDTGFVKAMEFGDVLRSVCQK), 1193–1228 (SHYHTIVQEFENFDTLKSNTVSRDEFRSICTRHIQI), and 1229–1264 (LTDEQFDRLWSELPVNAKGRLKYQDFLSKLSIERVP). Ca(2+) contacts are provided by D776, D778, D780, and D787. Phosphothreonine is present on T906. A disordered region spans residues 1263-1318 (VPSPPMAAGDSGESTMAQRGSSAPEFSQGTRSNLYSPPRDSRVGLKSRSHPCTPVG). S1265 is subject to Phosphoserine. Residues 1274–1297 (GESTMAQRGSSAPEFSQGTRSNLY) are compositionally biased toward polar residues. S1311 is subject to Phosphoserine. Phosphothreonine occurs at positions 1315 and 1319. The interval 1318–1516 (GTPPLQNCEP…YNDFLRAFLQ (199 aa)) is interaction with PARK7. EF-hand domains are found at residues 1348–1373 (KEKDTDKQGTISAAEFLALVEKFKLD), 1374–1409 (ISREESQQLIVKYDLKNNGKFAYCDFIQSCVLLLKA), 1454–1484 (MRRSFKTYDKNGTGLLSVADFRKVLRQYSIN), and 1485–1516 (LSEEEFFHVLEYYDKSLSSKISYNDFLRAFLQ). An interaction with AR region spans residues 1422–1516 (NADKMKEAGM…YNDFLRAFLQ (95 aa)). Ca(2+) contacts are provided by D1462, N1464, T1466, and D1473.

As to quaternary structure, microtubule inner protein component of sperm flagellar doublet microtubules. Binds PARK7. Part of a ternary complex containing PARK7, EFCAB6/DJBP and AR.

Its subcellular location is the nucleus. The protein resides in the cytoplasm. It is found in the cytoskeleton. The protein localises to the flagellum axoneme. Negatively regulates the androgen receptor by recruiting histone deacetylase complex, and protein DJ-1 antagonizes this inhibition by abrogation of this complex. Microtubule inner protein (MIP) part of the dynein-decorated doublet microtubules (DMTs) in cilia axoneme, which is required for motile cilia beating. This Mus musculus (Mouse) protein is EF-hand calcium-binding domain-containing protein 6 (Efcab6).